A 442-amino-acid polypeptide reads, in one-letter code: Glycolipid 2-alpha-mannosyltransferase (442 aa).

Over 1–11 (MALFLSKRLLR) the chain is Cytoplasmic. Residues 12-30 (FTVIAGAVIVLLLTLNSNS) form a helical; Signal-anchor for type II membrane protein membrane-spanning segment. The segment at 31 to 118 (RTQQYIPSSI…YITPSFANKA (88 aa)) is stem region. Residues 31-442 (RTQQYIPSSI…KPKNWKKFRE (412 aa)) are Lumenal-facing. A disordered region spans residues 68 to 95 (EQSALNSEASEDSEAMDEESKALKAAAE). The span at 85 to 95 (EESKALKAAAE) shows a compositional bias: basic and acidic residues. The segment at 119-442 (GKPKACYVTL…KPKNWKKFRE (324 aa)) is catalytic. Asn-197 carries N-linked (GlcNAc...) asparagine glycosylation. Catalysis depends on Glu-329, which acts as the Nucleophile.

Belongs to the glycosyltransferase 15 family. It depends on Mn(2+) as a cofactor.

The protein resides in the golgi apparatus membrane. It participates in protein modification; protein glycosylation. In terms of biological role, mannosyltransferase that transfers an alpha-D-mannosyl residue from GDP-mannose into lipid-linked oligosaccharide, forming an alpha-(1-&gt;2)-D-mannosyl-D-mannose linkage. Required for the attachment of the third mannose residue of O-linked saccharides. This is Glycolipid 2-alpha-mannosyltransferase (KRE2) from Saccharomyces cerevisiae (strain ATCC 204508 / S288c) (Baker's yeast).